Consider the following 536-residue polypeptide: MFRYHSILLLAILYFFEYGLAYKILVFSPATSKSHLISNGRIADELAKAGHNVTLLEIDFLGIVDSTKSAKLVKKTIVRVPKKMQGFKNVIQSFSEGVMEDEGLFELLKGNIAYQTVYNDLCEEFLENEVMFNKLKDENFDAFFAEQLNICGFGYAKALGIQRKFLISSCPFFSHVYDYTSHPAPYASVPFISDMSPEPTYLERTNNLLRGITINTFFYFSHNRLTSIFRKKFGDDFPAITEIVRNVDIIFLATDEIIDFSSPTLPNLVHVGGLGVDDDTTEMGPVFEAEMKKGDKGVIYFSLGTIANTSTIDKKVMESFLEIVKKFPDYHFLIRADKNDKNTKDKATEISNVFVSDWLPQPAILHHPRLRTFITHAGYNGLMEAALAGVPLITIPFMFDQNLNSRAIEKKGWGIRRDKKQFLTEPNAIEEAIREMLTNPSYTKQAHRVRDLMRNKPMGARDRFIKTTEWVIQNGGVHELLTEGRDLSIIKYYNLDIIVPCFFVAFYFIIFPFFKLFGGFYYYSCFGHIESKYKKD.

An N-terminal signal peptide occupies residues 1 to 21 (MFRYHSILLLAILYFFEYGLA). N-linked (GlcNAc...) asparagine glycans are attached at residues N52 and N308. Residues 497-517 (IIVPCFFVAFYFIIFPFFKLF) form a helical membrane-spanning segment.

Belongs to the UDP-glycosyltransferase family.

It localises to the membrane. It catalyses the reaction glucuronate acceptor + UDP-alpha-D-glucuronate = acceptor beta-D-glucuronoside + UDP + H(+). In Caenorhabditis elegans, this protein is Putative UDP-glucuronosyltransferase ugt-47 (ugt-47).